Consider the following 173-residue polypeptide: Translationally-controlled tumor protein homolog (173 aa).

In terms of domain architecture, TCTP spans 1-173 (MIIFKDMITG…FKHGLEEEKV (173 aa)).

Belongs to the TCTP family. Expressed by the venom gland.

The protein resides in the secreted. Functionally, venom protein that causes edema, enhances vascular permeability and is likely related to the inflammatory activity of the venom. In Grammostola rosea (Chilean rose tarantula), this protein is Translationally-controlled tumor protein homolog.